The primary structure comprises 97 residues: Citrate lyase acyl carrier protein 2 (97 aa).

Ser-14 carries the post-translational modification O-(phosphoribosyl dephospho-coenzyme A)serine.

The protein belongs to the CitD family. Oligomer with a subunit composition of (alpha,beta,gamma)6.

It localises to the cytoplasm. In terms of biological role, covalent carrier of the coenzyme of citrate lyase. The chain is Citrate lyase acyl carrier protein 2 from Salmonella paratyphi A (strain ATCC 9150 / SARB42).